A 504-amino-acid polypeptide reads, in one-letter code: Maturase K (504 aa).

This sequence belongs to the intron maturase 2 family. MatK subfamily.

It localises to the plastid. Its subcellular location is the chloroplast. Its function is as follows. Usually encoded in the trnK tRNA gene intron. Probably assists in splicing its own and other chloroplast group II introns. The chain is Maturase K from Barbarea vulgaris (Yellow rocket).